Reading from the N-terminus, the 303-residue chain is Protoheme IX farnesyltransferase 2 (303 aa).

9 consecutive transmembrane segments (helical) span residues 29 to 49 (VVAL…PGIV), 51 to 71 (LQPL…AAAF), 96 to 118 (ISTT…VLYT), 123 to 143 (LTAW…TAYL), 150 to 170 (NIVI…TAIT), 177 to 197 (ALLL…ALAI), 223 to 243 (CILL…LVGM), 244 to 264 (CGPI…YKAW), and 281 to 301 (FSIY…YFWV).

It belongs to the UbiA prenyltransferase family. Protoheme IX farnesyltransferase subfamily.

The protein resides in the cell inner membrane. The catalysed reaction is heme b + (2E,6E)-farnesyl diphosphate + H2O = Fe(II)-heme o + diphosphate. The protein operates within porphyrin-containing compound metabolism; heme O biosynthesis; heme O from protoheme: step 1/1. Its function is as follows. Converts heme B (protoheme IX) to heme O by substitution of the vinyl group on carbon 2 of heme B porphyrin ring with a hydroxyethyl farnesyl side group. The polypeptide is Protoheme IX farnesyltransferase 2 (Shewanella frigidimarina (strain NCIMB 400)).